Reading from the N-terminus, the 571-residue chain is MAKRGKKGGIPRAEMVQVASANRDENQVTELKKADYLPYLFNLVMPKMFFKSPNRIVMARLYPDVHKHDQQSAEYFEGFQAPCFDLPASLFPDNAPIDKIVFMPTVMLPMGFEAGGVFGPGVLPRDCYPVDLIRTEHEGPMPPLFVGLRSMNISLASMIDSFLDMYDNPEGEDAFVYEMHATDHHYDDDITEELMLRPDFTLSVAYSLPATMRLPSPYPYPCVQAQDNIYTPDLSKVLMLMPHQLNITVSILSTVNNPHVPSVAFATMCDEEECPTFDLPTDVFPICEGVNRPIFLPKRFMPKGFEACCVFKPGSLSELWFIKRIGRFGTPQQQHNCTITPPLFVGKYSRDGECTDMIEEIRMNFDKKARESAKSIASLTLETLGGLSRHITSTKGFLVMESDKPTPPAGAYSVESYEEASEDGCIAKVTKECASKITDTRDDGINTADYQSQFPELEPEPEPEPEDEGEDVANKKKCLSCFKIDSDIDVMSHAIAELTVAELSMLGEENPVPGVDTELALDQLREVLENRGEIRSNTDDLMRDHIYRMERDLMLALRQPIRKCCECTVNF.

A disordered region spans residues 440–472; that stretch reads TRDDGINTADYQSQFPELEPEPEPEPEDEGEDV. Residues 457 to 471 show a composition bias toward acidic residues; the sequence is LEPEPEPEPEDEGED.

Belongs to the DM7 family.

The sequence is that of DM7 family protein CG15332 from Drosophila melanogaster (Fruit fly).